The primary structure comprises 1272 residues: AF4/FMR2 family member 2 (1272 aa).

Disordered regions lie at residues 93–183, 201–225, and 283–302; these read IPKN…LTQD, QIGE…GEDA, and AYVR…PTLK. Residues 97 to 107 show a composition bias toward polar residues; it reads SVPQNPNNKNE. A compositionally biased stretch (basic and acidic residues) spans 151 to 160; sequence SKPEWSRDSH. Over residues 161–183 the composition is skewed to polar residues; it reads NPSTVLASQASGQPNKMQTLTQD. S391 is modified (phosphoserine). Disordered stretches follow at residues 418 to 491, 535 to 687, 779 to 829, and 842 to 903; these read KAKP…KWQL, TNAS…DQEE, SLHA…PEKK, and PPCI…QDKN. Pro residues predominate over residues 426–438; that stretch reads VNPPLATPQPPPA. Over residues 439 to 452 the composition is skewed to low complexity; it reads VQASGGSGSSSESE. The residue at position 478 (T478) is a Phosphothreonine. Basic and acidic residues predominate over residues 543–558; it reads EPKERPLLSLIREKAR. Polar residues predominate over residues 576–586; the sequence is STTSETVSQRT. Residues 616–629 are compositionally biased toward basic and acidic residues; the sequence is PKEKESVELHDPPR. Residues 630 to 640 are compositionally biased toward basic residues; the sequence is GRNKATAHKPA. Residues 818–829 are compositionally biased toward basic and acidic residues; sequence PTEVAEKIPEKK. 2 stretches are compositionally biased toward pro residues: residues 844 to 853 and 874 to 883; these read CISPAPPHKP and FPPPLSPLPE.

Belongs to the AF4 family.

It localises to the nucleus speckle. In terms of biological role, RNA-binding protein. Might be involved in alternative splicing regulation through an interaction with G-quartet RNA structure. In Pan troglodytes (Chimpanzee), this protein is AF4/FMR2 family member 2 (AFF2).